The sequence spans 338 residues: Tetraacyldisaccharide 4'-kinase (338 aa).

66 to 73 (IAGGAGKT) is a binding site for ATP.

Belongs to the LpxK family.

The catalysed reaction is a lipid A disaccharide + ATP = a lipid IVA + ADP + H(+). Its pathway is glycolipid biosynthesis; lipid IV(A) biosynthesis; lipid IV(A) from (3R)-3-hydroxytetradecanoyl-[acyl-carrier-protein] and UDP-N-acetyl-alpha-D-glucosamine: step 6/6. Its function is as follows. Transfers the gamma-phosphate of ATP to the 4'-position of a tetraacyldisaccharide 1-phosphate intermediate (termed DS-1-P) to form tetraacyldisaccharide 1,4'-bis-phosphate (lipid IVA). The protein is Tetraacyldisaccharide 4'-kinase of Delftia acidovorans (strain DSM 14801 / SPH-1).